The following is a 183-amino-acid chain: ATP synthase subunit delta (183 aa).

It belongs to the ATPase delta chain family. In terms of assembly, F-type ATPases have 2 components, F(1) - the catalytic core - and F(0) - the membrane proton channel. F(1) has five subunits: alpha(3), beta(3), gamma(1), delta(1), epsilon(1). F(0) has three main subunits: a(1), b(2) and c(10-14). The alpha and beta chains form an alternating ring which encloses part of the gamma chain. F(1) is attached to F(0) by a central stalk formed by the gamma and epsilon chains, while a peripheral stalk is formed by the delta and b chains.

It localises to the cell inner membrane. F(1)F(0) ATP synthase produces ATP from ADP in the presence of a proton or sodium gradient. F-type ATPases consist of two structural domains, F(1) containing the extramembraneous catalytic core and F(0) containing the membrane proton channel, linked together by a central stalk and a peripheral stalk. During catalysis, ATP synthesis in the catalytic domain of F(1) is coupled via a rotary mechanism of the central stalk subunits to proton translocation. In terms of biological role, this protein is part of the stalk that links CF(0) to CF(1). It either transmits conformational changes from CF(0) to CF(1) or is implicated in proton conduction. This Rickettsia prowazekii (strain Madrid E) protein is ATP synthase subunit delta.